A 92-amino-acid chain; its full sequence is Small ribosomal subunit protein uS19 (92 aa).

It belongs to the universal ribosomal protein uS19 family.

Protein S19 forms a complex with S13 that binds strongly to the 16S ribosomal RNA. In Rhodopseudomonas palustris (strain BisA53), this protein is Small ribosomal subunit protein uS19.